The sequence spans 245 residues: Phosphoribosylaminoimidazole-succinocarboxamide synthase (245 aa).

Belongs to the SAICAR synthetase family.

The enzyme catalyses 5-amino-1-(5-phospho-D-ribosyl)imidazole-4-carboxylate + L-aspartate + ATP = (2S)-2-[5-amino-1-(5-phospho-beta-D-ribosyl)imidazole-4-carboxamido]succinate + ADP + phosphate + 2 H(+). It functions in the pathway purine metabolism; IMP biosynthesis via de novo pathway; 5-amino-1-(5-phospho-D-ribosyl)imidazole-4-carboxamide from 5-amino-1-(5-phospho-D-ribosyl)imidazole-4-carboxylate: step 1/2. This is Phosphoribosylaminoimidazole-succinocarboxamide synthase from Nostoc sp. (strain PCC 7120 / SAG 25.82 / UTEX 2576).